A 206-amino-acid chain; its full sequence is High frequency lysogenization protein HflD homolog (206 aa).

The protein belongs to the HflD family.

Its subcellular location is the cytoplasm. It localises to the cell inner membrane. This chain is High frequency lysogenization protein HflD homolog, found in Marinobacter nauticus (strain ATCC 700491 / DSM 11845 / VT8) (Marinobacter aquaeolei).